We begin with the raw amino-acid sequence, 317 residues long: Exopolysaccharide production protein ExoZ (317 aa).

Transmembrane regions (helical) follow at residues 14-34 (TIGAAGVDVFFVISGFIMWVI), 53-73 (IVPVYWLATGVMVAGALAGLF), 100-120 (IWPVLVQGWTLNFEMLFYAVF), 132-152 (LPVVSGLFLALVIAGRVVAFD), 185-205 (LAVGSALFACSLGGFALIGVL), 206-226 (GLPFDELTTGPLAVLLVIGVL), and 268-288 (IGLGAPATMFAAVLSGTLIGI).

It belongs to the acyltransferase 3 family.

Its subcellular location is the cell membrane. Functionally, required for the acetyl modification of the third sugar (glucose) of the octasaccharide subunit of succinoglycan (EPS I). This is Exopolysaccharide production protein ExoZ (exoZ) from Rhizobium meliloti (strain 1021) (Ensifer meliloti).